The sequence spans 344 residues: NDP-polyphosphate phosphotransferase 2 (344 aa).

Residues 1 to 60 are disordered; it reads METAKPIAPQKDSKANGVDATDPVVKVASPQDPAGDAKVEDATAPVAEVEPRTPRNRRLP.

The protein belongs to the polyphosphate kinase 2 (PPK2) family. Class I subfamily. Mg(2+) serves as cofactor.

The catalysed reaction is [phosphate](n) + ATP = [phosphate](n+1) + ADP. The enzyme catalyses [phosphate](n) + CTP = [phosphate](n+1) + CDP. It catalyses the reaction [phosphate](n) + GTP = [phosphate](n+1) + GDP. It carries out the reaction [phosphate](n) + UTP = [phosphate](n+1) + UDP. Uses inorganic polyphosphate (polyP) as a donor to convert NDP to NTP. PolyP hydrolysis is slightly faster with ADP, but it can also use GDP, CDP and UDP. This Ruegeria pomeroyi (strain ATCC 700808 / DSM 15171 / DSS-3) (Silicibacter pomeroyi) protein is NDP-polyphosphate phosphotransferase 2.